The sequence spans 167 residues: Ubiquitin-fold modifier-conjugating enzyme 1 (167 aa).

Cys116 serves as the catalytic Glycyl thioester intermediate. Residue Lys122 forms a Glycyl lysine isopeptide (Lys-Gly) (interchain with G-Cter in UFM1) linkage.

The protein belongs to the ubiquitin-conjugating enzyme family. UFC1 subfamily. As to quaternary structure, interacts with UBA5 (via C-terminus). Interacts with UFL1. Interacts with UFM1. Interacts with KIRREL3. Post-translationally, ufmylated at Lys-122. Deufmylated by UFSP1.

In terms of biological role, E2-like enzyme which specifically catalyzes the second step in ufmylation. Accepts the ubiquitin-like modifier UFM1 from the E1 enzyme UBA5 and forms an intermediate with UFM1 via a thioester linkage. Ufmylation is involved in various processes, such as ribosome recycling, response to DNA damage, interferon response or reticulophagy (also called ER-phagy). In Rattus norvegicus (Rat), this protein is Ubiquitin-fold modifier-conjugating enzyme 1.